Here is a 290-residue protein sequence, read N- to C-terminus: MNKLVSGNNIIPSVNFHLWEPCNMRCKFCFAKFQDVKSTILPKGHLKKEQTLEIVEQLAEYGFQKITFVGGEPTLCPWISELIKKANLLGMTTMIVTNGSNLSKDFLVQNQSYLDWITLSIDSINSSTNKVVGRSTNSIHPDRIYYNQLIQTIYEYGYRLKINTVVTKANLNEDLNDFVNDAKPERWKVFQVLPVRGQNDNDIDELLISEKEFNEYVNRHSKNKFLITETNTDMTNTYVMVDPAGRFFNNQNGNYMYSDHILEVGVQKAFEEMGYNYDKFIDRKGIYQWK.

The Radical SAM core domain maps to 6-226 (SGNNIIPSVN…VNRHSKNKFL (221 aa)). 3 residues coordinate [4Fe-4S] cluster: Cys22, Cys26, and Cys29.

It belongs to the radical SAM superfamily. Viperin family. The cofactor is [4Fe-4S] cluster.

The catalysed reaction is UTP + AH2 + S-adenosyl-L-methionine = 3'-deoxy-3',4'-didehydro-UTP + 5'-deoxyadenosine + L-methionine + A + H2O + H(+). Expression of pVip47 in E.coli (strain MG1655) confers resistance to phage P1; has no effect against T7. Catalyzes the conversion of uridine triphosphate (UTP) to 3'-deoxy-3',4'-didehydro-UTP (ddhUTP), probably via a SAM-dependent radical mechanism. The modified nucleotide represses transcription from T7 RNA polymerase-directed genes (possibly by acting as chain terminators), strongly suggesting these nucleotides block viral polymerase transcription. How this protein allows bacteria to resist viruses that do not encode their own RNA polymerase (such as lambda, P1) is unknown. The sequence is that of S-adenosylmethionine-dependent nucleotide dehydratase from Flammeovirga pacifica.